A 243-amino-acid polypeptide reads, in one-letter code: VQ motif-containing protein 33 (243 aa).

Residues 1-16 show a composition bias toward polar residues; it reads MEVSTSSMSSKPEQMQ. Positions 1-49 are disordered; the sequence is MEVSTSSMSSKPEQMQNPPPMISSPRFQPQIISPHHHDQHQHLSNPYPT. The VQ motif lies at 59–68; it reads FKQVVQMLTG. Disordered stretches follow at residues 69–98 and 138–162; these read SSTD…SIPP and FTGG…SENI. A phosphoserine mark is found at serine 83 and serine 95. The segment covering 84–98 has biased composition (polar residues); sequence PVNNNNKGSSFSIPP. Threonine 139 carries the post-translational modification Phosphothreonine. Phosphoserine occurs at positions 148, 152, 165, 167, and 178. Residues 149–162 show a composition bias toward low complexity; it reads PRFSPRNSSSSENI. A disordered region spans residues 180–243; it reads VTPLRSNDDP…FPVASPARNS (64 aa). Threonine 181 bears the Phosphothreonine mark. Residues 191–201 show a composition bias toward polar residues; the sequence is NKSSPLSLGNS. Serine 218 and serine 221 each carry phosphoserine. Threonine 222 carries the phosphothreonine modification. Serine 238 bears the Phosphoserine mark.

Post-translationally, phosphorylated on serine and threonine residues by MPK6.

Its subcellular location is the nucleus. Functionally, may modulate WRKY transcription factor activities. In Arabidopsis thaliana (Mouse-ear cress), this protein is VQ motif-containing protein 33.